The chain runs to 217 residues: 3,4-dihydroxy-2-butanone 4-phosphate synthase (217 aa).

Residues 37–38 (RE), D42, 150–154 (RGGHT), and E174 contribute to the D-ribulose 5-phosphate site. Mg(2+) is bound at residue E38. Position 153 (H153) interacts with Mg(2+).

This sequence belongs to the DHBP synthase family. As to quaternary structure, homodimer. It depends on Mg(2+) as a cofactor. The cofactor is Mn(2+).

It catalyses the reaction D-ribulose 5-phosphate = (2S)-2-hydroxy-3-oxobutyl phosphate + formate + H(+). It functions in the pathway cofactor biosynthesis; riboflavin biosynthesis; 2-hydroxy-3-oxobutyl phosphate from D-ribulose 5-phosphate: step 1/1. Its function is as follows. Catalyzes the conversion of D-ribulose 5-phosphate to formate and 3,4-dihydroxy-2-butanone 4-phosphate. This Pectobacterium atrosepticum (strain SCRI 1043 / ATCC BAA-672) (Erwinia carotovora subsp. atroseptica) protein is 3,4-dihydroxy-2-butanone 4-phosphate synthase.